We begin with the raw amino-acid sequence, 66 residues long: Phylloseptin-B1 (66 aa).

The signal sequence occupies residues 1–22 (MAFLKKSLFLVLFLGLVSLSIC). Positions 23–46 (EEEKRETEEKEYDQGEDDKSEEKR) are excised as a propeptide. The residue at position 65 (Leu65) is a Leucine amide.

This sequence belongs to the frog skin active peptide (FSAP) family. Phylloseptin subfamily. In terms of tissue distribution, expressed by the skin glands.

The protein resides in the secreted. Its subcellular location is the target cell membrane. In terms of biological role, antimicrobial peptide with activity against only a few strains of Gram-positive bacteria (S.aureus and B.megaterium). Acts in a synergistic effect in combination with Plasticin-B1 at doses that are not active alone. The protein is Phylloseptin-B1 of Phyllomedusa bicolor (Two-colored leaf frog).